The chain runs to 299 residues: Tyrosine recombinase XerC (299 aa).

Residues 1 to 85 (MEQHLDAYCM…AVRGFYKYLN (85 aa)) form the Core-binding (CB) domain. The Tyr recombinase domain occupies 106 to 285 (RLPKTLDTDR…DFQHLATVYD (180 aa)). Residues Arg-146, Lys-170, His-237, Arg-240, and His-263 contribute to the active site. Tyr-272 functions as the O-(3'-phospho-DNA)-tyrosine intermediate in the catalytic mechanism.

Belongs to the 'phage' integrase family. XerC subfamily. In terms of assembly, forms a cyclic heterotetrameric complex composed of two molecules of XerC and two molecules of XerD.

The protein localises to the cytoplasm. In terms of biological role, site-specific tyrosine recombinase, which acts by catalyzing the cutting and rejoining of the recombining DNA molecules. The XerC-XerD complex is essential to convert dimers of the bacterial chromosome into monomers to permit their segregation at cell division. It also contributes to the segregational stability of plasmids. This chain is Tyrosine recombinase XerC, found in Pseudomonas syringae pv. tomato (strain ATCC BAA-871 / DC3000).